The primary structure comprises 309 residues: ADP-L-glycero-D-manno-heptose-6-epimerase (309 aa).

NADP(+)-binding positions include 10 to 11, 31 to 32, lysine 38, lysine 53, 75 to 79, and asparagine 92; these read MI, DN, and EGACS. The active-site Proton acceptor is tyrosine 139. Residue lysine 143 participates in NADP(+) binding. Residue asparagine 168 participates in substrate binding. 2 residues coordinate NADP(+): valine 169 and lysine 177. Lysine 177 (proton acceptor) is an active-site residue. Residues serine 179, histidine 186, 200-203, arginine 208, and tyrosine 271 contribute to the substrate site; that span reads FDGS.

Belongs to the NAD(P)-dependent epimerase/dehydratase family. HldD subfamily. As to quaternary structure, homopentamer. The cofactor is NADP(+).

It catalyses the reaction ADP-D-glycero-beta-D-manno-heptose = ADP-L-glycero-beta-D-manno-heptose. Its pathway is nucleotide-sugar biosynthesis; ADP-L-glycero-beta-D-manno-heptose biosynthesis; ADP-L-glycero-beta-D-manno-heptose from D-glycero-beta-D-manno-heptose 7-phosphate: step 4/4. In terms of biological role, catalyzes the interconversion between ADP-D-glycero-beta-D-manno-heptose and ADP-L-glycero-beta-D-manno-heptose via an epimerization at carbon 6 of the heptose. This chain is ADP-L-glycero-D-manno-heptose-6-epimerase, found in Serratia proteamaculans (strain 568).